The sequence spans 22 residues: Motilin (22 aa).

The segment at phenylalanine 1–glutamine 22 is disordered. The segment covering glutamate 9–glutamine 22 has biased composition (basic and acidic residues).

This sequence belongs to the motilin family.

The protein localises to the secreted. Its function is as follows. Plays an important role in the regulation of interdigestive gastrointestinal motility and indirectly causes rhythmic contraction of duodenal and colonic smooth muscle. In Canis lupus familiaris (Dog), this protein is Motilin (MLN).